We begin with the raw amino-acid sequence, 324 residues long: 26S proteasome non-ATPase regulatory subunit 7 (324 aa).

In terms of domain architecture, MPN spans 9 to 144 (VVVHPLVLLS…TEAYISVEEV (136 aa)). Residue Lys-180 forms a Glycyl lysine isopeptide (Lys-Gly) (interchain with G-Cter in ubiquitin) linkage. N6-acetyllysine occurs at positions 204, 214, 316, and 317. Residues 281-324 (ANRDAEKKEGQEKEESKKDRKEDKEKDKDKEKSDVKKEEKKEKK) form a disordered region.

It belongs to the peptidase M67A family. As to quaternary structure, component of the 19S proteasome regulatory particle complex. The 26S proteasome consists of a 20S core particle (CP) and two 19S regulatory subunits (RP). The regulatory particle is made of a lid composed of 9 subunits including PSMD7, a base containing 6 ATPases and few additional components. Within the complex, PSMD7 interacts with subunit PSMD4 through their respective MPN domain. Interacts with TRIM5.

Functionally, component of the 26S proteasome, a multiprotein complex involved in the ATP-dependent degradation of ubiquitinated proteins. This complex plays a key role in the maintenance of protein homeostasis by removing misfolded or damaged proteins, which could impair cellular functions, and by removing proteins whose functions are no longer required. Therefore, the proteasome participates in numerous cellular processes, including cell cycle progression, apoptosis, or DNA damage repair. The chain is 26S proteasome non-ATPase regulatory subunit 7 (PSMD7) from Homo sapiens (Human).